Here is a 667-residue protein sequence, read N- to C-terminus: E3 ubiquitin-protein ligase Midline-1 (667 aa).

The RING-type zinc-finger motif lies at 10-60 (CPICLELLEDPLLLPCAHSLCFNCAHRILVSHCATNEPVESINAFQCPTCR). Residues S92 and S96 each carry the phosphoserine modification. 2 consecutive B box-type zinc fingers follow at residues 116-165 (KVLC…IEPI) and 172-212 (GLMC…VAAL). C119, C122, C134, C137, C142, C145, H150, H159, C175, H178, C198, and H204 together coordinate Zn(2+). Residues 205–264 (RDHQVAALSERYDKLKQNLESNLTNLIKRNTELETLLAKLIQTCQHVEVNASRQEAKLTE) adopt a coiled-coil conformation. The COS domain maps to 320-379 (LKENDHARFLQTAKNITERVSMATASSQVLIPEINLNDTFDTFALDFSREKKLLECLDYL). The 104-residue stretch at 381–484 (APNPPTIREE…EPGKLKTNSQ (104 aa)) folds into the Fibronectin type-III domain. Residues 471 to 485 (SRSSEPGKLKTNSQP) show a composition bias toward polar residues. Residues 471-524 (SRSSEPGKLKTNSQPFKLDPKSAHRKLKVSHDNLTVERDESSSKKSHTPERFTS) are disordered. In terms of domain architecture, B30.2/SPRY spans 482 to 659 (NSQPFKLDPK…IITGLPIPDH (178 aa)). The segment covering 499–520 (VSHDNLTVERDESSSKKSHTPE) has biased composition (basic and acidic residues). S511 carries the post-translational modification Phosphoserine.

This sequence belongs to the TRIM/RBCC family. Homodimer or heterodimer with MID2. Interacts with IGBP1.

The protein localises to the cytoplasm. Its subcellular location is the cytoskeleton. The catalysed reaction is S-ubiquitinyl-[E2 ubiquitin-conjugating enzyme]-L-cysteine + [acceptor protein]-L-lysine = [E2 ubiquitin-conjugating enzyme]-L-cysteine + N(6)-ubiquitinyl-[acceptor protein]-L-lysine.. In terms of biological role, has E3 ubiquitin ligase activity towards IGBP1, promoting its monoubiquitination, which results in deprotection of the catalytic subunit of protein phosphatase PP2A, and its subsequent degradation by polyubiquitination. The chain is E3 ubiquitin-protein ligase Midline-1 (Mid1) from Mus spretus (Western Mediterranean mouse).